The following is a 415-amino-acid chain: Light-independent protochlorophyllide reductase subunit N (415 aa).

[4Fe-4S] cluster is bound by residues Cys16, Cys41, and Cys98.

It belongs to the BchN/ChlN family. As to quaternary structure, protochlorophyllide reductase is composed of three subunits; BchL, BchN and BchB. Forms a heterotetramer of two BchB and two BchN subunits. [4Fe-4S] cluster serves as cofactor.

The catalysed reaction is chlorophyllide a + oxidized 2[4Fe-4S]-[ferredoxin] + 2 ADP + 2 phosphate = protochlorophyllide a + reduced 2[4Fe-4S]-[ferredoxin] + 2 ATP + 2 H2O. It functions in the pathway porphyrin-containing compound metabolism; bacteriochlorophyll biosynthesis (light-independent). In terms of biological role, component of the dark-operative protochlorophyllide reductase (DPOR) that uses Mg-ATP and reduced ferredoxin to reduce ring D of protochlorophyllide (Pchlide) to form chlorophyllide a (Chlide). This reaction is light-independent. The NB-protein (BchN-BchB) is the catalytic component of the complex. In Roseiflexus sp. (strain RS-1), this protein is Light-independent protochlorophyllide reductase subunit N.